The primary structure comprises 130 residues: uncharacterized protein (130 aa).

2 stretches are compositionally biased toward polar residues: residues 1–27 and 36–46; these read MEIL…QPSQ and QAENQETAKNG. Disordered regions lie at residues 1–46 and 103–130; these read MEIL…AKNG and VSAQ…ELDL. Residues 27 to 51 are a coiled coil; the sequence is QDAHEKARQQAENQETAKNGMISQI.

It belongs to the PDCD5 family.

This is an uncharacterized protein from Caenorhabditis elegans.